Here is an 882-residue protein sequence, read N- to C-terminus: Bifunctional heparan sulfate N-deacetylase/N-sulfotransferase 1 (882 aa).

Over 1–17 (MPALACLRRLCRHLSPQ) the chain is Cytoplasmic. The segment at 1–169 (MPALACLRRL…VAYGVGIIGF (169 aa)) is sufficient for localization to Golgi membrane. Residues 18–38 (AVLFLLFVFCLFSVFVSAYYL) form a helical; Signal-anchor for type II membrane protein membrane-spanning segment. The Lumenal segment spans residues 39–882 (YGWNRGLEPS…WLREDLQNTR (844 aa)). A heparan sulfate N-deacetylase 1 region spans residues 40–598 (GWNRGLEPSA…KRHKDIWSKE (559 aa)). 3 N-linked (GlcNAc...) asparagine glycosylation sites follow: Asn231, Asn351, and Asn401. The heparan sulfate N-sulfotransferase 1 stretch occupies residues 599-882 (KTCDRFPKLL…WLREDLQNTR (284 aa)). The For sulfotransferase activity role is filled by Lys614. 614-618 (KTGTT) provides a ligand contact to adenosine 3',5'-bisphosphate. Asn667 is a glycosylation site (N-linked (GlcNAc...) asparagine). Adenosine 3',5'-bisphosphate contacts are provided by Ser712 and Trp817. Cys818 and Cys828 are joined by a disulfide. 833 to 837 (KGRKY) contacts adenosine 3',5'-bisphosphate.

The protein belongs to the sulfotransferase 1 family. NDST subfamily. Monomer. Interacts with heparan sulfate co-polymerase subunits EXT1 and EXT2. Widely expressed in adult and throughout development.

The protein localises to the golgi apparatus membrane. The protein resides in the golgi apparatus. Its subcellular location is the trans-Golgi network membrane. It is found in the cis-Golgi network membrane. The enzyme catalyses N-acetyl-alpha-D-glucosaminyl-[heparan sulfate](n) + H2O = alpha-D-glucosaminyl-[heparan sulfate](n) + acetate. It catalyses the reaction alpha-D-glucosaminyl-[heparan sulfate](n) + 3'-phosphoadenylyl sulfate = N-sulfo-alpha-D-glucosaminyl-[heparan sulfate](n) + adenosine 3',5'-bisphosphate + 2 H(+). It participates in glycan metabolism; heparan sulfate biosynthesis. It functions in the pathway glycan metabolism; heparin biosynthesis. Its activity is regulated as follows. Inhibited by long N-sulfated sequences (more than 6 sugar residues) accumulating in its substrates heparan sulfate, and heparin. Its function is as follows. Essential bifunctional enzyme that catalyzes both the N-deacetylation and the N-sulfation of glucosamine (GlcNAc) of the glycosaminoglycan in heparan sulfate. Modifies the GlcNAc-GlcA disaccharide repeating sugar backbone to make N-sulfated heparosan, a prerequisite substrate for later modifications in heparin biosynthesis. Plays a role in determining the extent and pattern of sulfation of heparan sulfate. Participates in biosynthesis of heparan sulfate that can ultimately serve as L-selectin ligands, thereby playing a role in inflammatory response. Required for the exosomal release of SDCBP, CD63 and syndecan. The polypeptide is Bifunctional heparan sulfate N-deacetylase/N-sulfotransferase 1 (Mus musculus (Mouse)).